A 108-amino-acid chain; its full sequence is Glutaredoxin-1 (108 aa).

The 104-residue stretch at 3–106 (EEFVQQRLAN…DILSSIGVLR (104 aa)) folds into the Glutaredoxin domain. Cys-23 and Cys-26 are oxidised to a cystine.

It belongs to the glutaredoxin family.

The protein resides in the virion. In terms of biological role, has thioltransferase and dehydroascorbate reductase activities. This chain is Glutaredoxin-1 (OPG075), found in Ectromelia virus (strain Moscow) (ECTV).